The following is a 473-amino-acid chain: MASRSLGGLSGIRGGGGGGGKKSLSARNAAVERRNLITVCRFSVKTLIDRSCFETIDDSSPEFNNFAAILEQILSHRLKEISQSCRWLAHLQIPLQGQVTWFGYESPRSFWDYIRVACRKVSQNCICSIENMENVSSSRAKGRAWIRVALMEKHLSEYISTALRDFKTTRRFYEDGAIVLGEEANMLAGMLLGLNAIDFSFCLKGEGLDGSFPAVIDYTPYLKYIQSSDSISSDEEELRTLGSSGSESSTPENVGPPFLMDENSWFNKCKRVKQKYQLTLEQKGYLEELLRLRENQLSESVSQNKILLQRIEDSDLAHKLEKEQLEYIIVELQDQLTVLKNNDLRSRQELTAHLTNQWPSPGALDVNAVALDTLLYRKHNKQWYEKSYQSLDQLSAEVSLSQTSLDPGQSQEGDGKQDTLNVMSEGKEDTPSLLGLCGSLTSVASYKSLTSLKSNDYLASPTTEMTSPGLTPS.

The segment at 1 to 24 (MASRSLGGLSGIRGGGGGGGKKSL) is disordered. Gly residues predominate over residues 8–21 (GLSGIRGGGGGGGK). Arg-13 bears the Omega-N-methylarginine mark. An RUN domain is found at 57 to 206 (DDSSPEFNNF…IDFSFCLKGE (150 aa)). Ser-232 and Ser-233 each carry phosphoserine. Positions 317–342 (AHKLEKEQLEYIIVELQDQLTVLKNN) form a coiled coil. Residues 399 to 422 (SLSQTSLDPGQSQEGDGKQDTLNV) are compositionally biased toward polar residues. The interval 399 to 428 (SLSQTSLDPGQSQEGDGKQDTLNVMSEGKE) is disordered.

The protein belongs to the RUNDC3 family. As to quaternary structure, interacts with RAP2A. In terms of tissue distribution, isoform 2 is expressed at high levels in brain, thymus, ovary, testis, leukocyte, liver, small intestine and prostate. Isoform 1 is expressed in the brain, testis and adrenal gland. It is activated in tumorigenic breast cancer cell lines and in the primary tumor of breast cancer patients. Activation also correlates with metastatic lymph node invasion and can be detected in metastatic epithelial cells from the lymph nodes and in the bone marrow of patients.

The chain is RUN domain-containing protein 3B (RUNDC3B) from Homo sapiens (Human).